Reading from the N-terminus, the 299-residue chain is Protein sprouty homolog 4 (299 aa).

An N-acetylmethionine modification is found at methionine 1. Disordered stretches follow at residues asparagine 55–alanine 79 and phenylalanine 92–proline 126. Residues phenylalanine 92–serine 107 show a composition bias toward low complexity. Residue serine 125 is modified to Phosphoserine. The 108-residue stretch at lysine 166–cysteine 273 folds into the SPR domain. Residues valine 181–phenylalanine 299 are required for interaction with TESK1. Required for colocalization with TESK1 at vesicular spots in the cytoplasm and inhibition of TESK1 kinase activity, resulting in inhibition of cell spreading.

Belongs to the sprouty family. As to quaternary structure, interacts (via C-terminus) with TESK1 (via both C- and N-termini); the interaction inhibits TESK1 kinase activity. Interacts with RAF1. Interacts with CAV1 (via C-terminus).

It localises to the cytoplasm. The protein resides in the cell projection. It is found in the ruffle membrane. In terms of biological role, suppresses the insulin receptor and EGFR-transduced MAPK signaling pathway, but does not inhibit MAPK activation by a constitutively active mutant Ras. Probably impairs the formation of GTP-Ras. Inhibits Ras-independent, but not Ras-dependent, activation of RAF1. Represses integrin-mediated cell spreading via inhibition of TESK1-mediated phosphorylation of cofilin. In Homo sapiens (Human), this protein is Protein sprouty homolog 4 (SPRY4).